The following is a 465-amino-acid chain: Hydroxyacid-oxoacid transhydrogenase, mitochondrial (465 aa).

This sequence belongs to the iron-containing alcohol dehydrogenase family. Hydroxyacid-oxoacid transhydrogenase subfamily.

The protein localises to the mitochondrion. It carries out the reaction (S)-3-hydroxybutanoate + 2-oxoglutarate = (R)-2-hydroxyglutarate + acetoacetate. The enzyme catalyses 4-hydroxybutanoate + 2-oxoglutarate = (R)-2-hydroxyglutarate + succinate semialdehyde. Functionally, catalyzes the cofactor-independent reversible oxidation of gamma-hydroxybutyrate (GHB) to succinic semialdehyde (SSA) coupled to reduction of 2-ketoglutarate (2-KG) to D-2-hydroxyglutarate (D-2-HG). L-3-hydroxybutyrate (L-3-OHB) is also a substrate for HOT when using 2-KG as hydrogen acceptor, resulting in the formation of D-2-HG. This chain is Hydroxyacid-oxoacid transhydrogenase, mitochondrial, found in Caenorhabditis elegans.